Reading from the N-terminus, the 246-residue chain is 3-deoxy-manno-octulosonate cytidylyltransferase (246 aa).

Belongs to the KdsB family.

Its subcellular location is the cytoplasm. It catalyses the reaction 3-deoxy-alpha-D-manno-oct-2-ulosonate + CTP = CMP-3-deoxy-beta-D-manno-octulosonate + diphosphate. It participates in nucleotide-sugar biosynthesis; CMP-3-deoxy-D-manno-octulosonate biosynthesis; CMP-3-deoxy-D-manno-octulosonate from 3-deoxy-D-manno-octulosonate and CTP: step 1/1. Its pathway is bacterial outer membrane biogenesis; lipopolysaccharide biosynthesis. Its function is as follows. Activates KDO (a required 8-carbon sugar) for incorporation into bacterial lipopolysaccharide in Gram-negative bacteria. In Rickettsia prowazekii (strain Madrid E), this protein is 3-deoxy-manno-octulosonate cytidylyltransferase.